Here is a 901-residue protein sequence, read N- to C-terminus: Probable inorganic carbon transporter subunit DabA (901 aa).

Cys424, Asp426, His606, and Cys621 together coordinate Zn(2+).

Belongs to the inorganic carbon transporter (TC 9.A.2) DabA family. Forms a complex with DabB. Requires Zn(2+) as cofactor.

Its subcellular location is the cell membrane. Functionally, part of an energy-coupled inorganic carbon pump. This is Probable inorganic carbon transporter subunit DabA from Staphylococcus aureus (strain MSSA476).